We begin with the raw amino-acid sequence, 159 residues long: SsrA-binding protein (159 aa).

Residues 131–148 (YDKRQTLREKQDRREAER) are compositionally biased toward basic and acidic residues. The tract at residues 131–159 (YDKRQTLREKQDRREAERTISAIKRKQRA) is disordered.

The protein belongs to the SmpB family.

It localises to the cytoplasm. In terms of biological role, required for rescue of stalled ribosomes mediated by trans-translation. Binds to transfer-messenger RNA (tmRNA), required for stable association of tmRNA with ribosomes. tmRNA and SmpB together mimic tRNA shape, replacing the anticodon stem-loop with SmpB. tmRNA is encoded by the ssrA gene; the 2 termini fold to resemble tRNA(Ala) and it encodes a 'tag peptide', a short internal open reading frame. During trans-translation Ala-aminoacylated tmRNA acts like a tRNA, entering the A-site of stalled ribosomes, displacing the stalled mRNA. The ribosome then switches to translate the ORF on the tmRNA; the nascent peptide is terminated with the 'tag peptide' encoded by the tmRNA and targeted for degradation. The ribosome is freed to recommence translation, which seems to be the essential function of trans-translation. This chain is SsrA-binding protein, found in Streptomyces coelicolor (strain ATCC BAA-471 / A3(2) / M145).